Reading from the N-terminus, the 1141-residue chain is cGMP-inhibited 3',5'-cyclic phosphodiesterase 3A (1141 aa).

The disordered stretch occupies residues 1 to 42; the sequence is MAVPGDAARVRDKPVHSGVSQAPTAGRDCHHRADPASPRDSG. The next 6 helical transmembrane spans lie at 61–81, 130–150, 160–180, 185–205, 210–230, and 232–252; these read LSSA…VRLV, LQPS…GLYL, AVAL…GLGV, LLSL…TWLV, LGVL…ISLE, and FKVA…ILLA. Position 312 is a phosphoserine (S312). Residues S428 and S438 each carry the phosphoserine; by PKA and PKC modification. Over residues 436-448 the composition is skewed to low complexity; the sequence is RVSSTWTTTTSAT. The segment at 436–482 is disordered; the sequence is RVSSTWTTTTSATGLPTLEPAPVRRDRSTSIKLQEAPSSSPDSWNNP. The span at 465–482 shows a compositional bias: polar residues; it reads SIKLQEAPSSSPDSWNNP. Phosphoserine occurs at positions 492, 520, and 524. A disordered region spans residues 590–640; sequence RPYSQGNPADEPLERSGVATRTPSRTDDTAQVTSDYETNNNSDSSDIVQNE. Polar residues predominate over residues 608 to 637; sequence ATRTPSRTDDTAQVTSDYETNNNSDSSDIV. The tract at residues 669–1141 is interaction with SLFN12; the sequence is KPILAPEPLV…EEIPTQKPDQ (473 aa). Positions 674–1093 constitute a PDEase domain; it reads PEPLVMDNLD…KMWKKVIEEE (420 aa). H752 functions as the Proton donor in the catalytic mechanism. Position 752 (H752) interacts with AMP. 4 residues coordinate Mn(2+): H756, H836, D837, and D950. Positions 837, 950, and 1001 each coordinate AMP. D837 serves as a coordination point for Mg(2+). 2 disordered regions span residues 1023 to 1062 and 1100 to 1141; these read PGKW…ESPK and ENQS…KPDQ. Residues 1029-1056 are compositionally biased toward acidic residues; sequence DSDESGDTDDPEEEEEEAPAPNEEETCE. S1033 is modified (phosphoserine). T1036 is subject to Phosphothreonine. The span at 1100–1113 shows a compositional bias: polar residues; sequence ENQSLDQTPQSHSS. A Glycyl lysine isopeptide (Lys-Gly) (interchain with G-Cter in SUMO2) cross-link involves residue K1120. Over residues 1125–1141 the composition is skewed to basic and acidic residues; sequence EKGKPRGEEIPTQKPDQ.

The protein belongs to the cyclic nucleotide phosphodiesterase family. PDE3 subfamily. As to quaternary structure, homodimer. Interacts with SLFN12; direct low affinity interaction which is stimulated by binding of 17beta-estradiol/E2 to PDE3A and that positively regulates the ribonuclease activity of SLFN12. Mn(2+) is required as a cofactor. It depends on Mg(2+) as a cofactor.

The protein localises to the membrane. Its subcellular location is the cytoplasm. It is found in the cytosol. The catalysed reaction is a nucleoside 3',5'-cyclic phosphate + H2O = a nucleoside 5'-phosphate + H(+). The enzyme catalyses 3',5'-cyclic AMP + H2O = AMP + H(+). It catalyses the reaction 3',5'-cyclic GMP + H2O = GMP + H(+). It carries out the reaction 3',5'-cyclic UMP + H2O = UMP + H(+). Its activity is regulated as follows. Inhibited by cGMP. Inhibited by 17beta-estradiol. Inhibited by milrinone. In terms of biological role, cyclic nucleotide phosphodiesterase with specificity for the second messengers cAMP and cGMP, which are key regulators of many important physiological processes. Also has activity toward cUMP. Independently of its catalytic activity it is part of an E2/17beta-estradiol-induced pro-apoptotic signaling pathway. E2 stabilizes the PDE3A/SLFN12 complex in the cytosol, promoting the dephosphorylation of SLFN12 and activating its pro-apoptotic ribosomal RNA/rRNA ribonuclease activity. This apoptotic pathway might be relevant in tissues with high concentration of E2 and be for instance involved in placenta remodeling. The chain is cGMP-inhibited 3',5'-cyclic phosphodiesterase 3A from Homo sapiens (Human).